A 68-amino-acid polypeptide reads, in one-letter code: Conotoxin Em11.5 (68 aa).

An N-terminal signal peptide occupies residues 1–26; it reads MMFRLTSVGCFLLVIACLNLFQVVLT. Disulfide bonds link cysteine 29–cysteine 43, cysteine 36–cysteine 48, cysteine 42–cysteine 52, and cysteine 47–cysteine 56. The residue at position 60 (phenylalanine 60) is a Phenylalanine amide. Residues 64 to 68 constitute a propeptide that is removed on maturation; that stretch reads ATFQE.

It belongs to the conotoxin I2 superfamily. In terms of tissue distribution, expressed by the venom duct.

It is found in the secreted. The sequence is that of Conotoxin Em11.5 from Conus emaciatus (False virgin cone).